We begin with the raw amino-acid sequence, 150 residues long: Cytochrome c-type biogenesis protein CcmE (150 aa).

At Met-1–Arg-7 the chain is on the cytoplasmic side. A helical; Signal-anchor for type II membrane protein transmembrane segment spans residues Leu-8 to Ala-28. At Phe-29–Arg-150 the chain is on the periplasmic side. Heme contacts are provided by His-123 and Tyr-127.

The protein belongs to the CcmE/CycJ family.

It is found in the cell inner membrane. Its function is as follows. Heme chaperone required for the biogenesis of c-type cytochromes. Transiently binds heme delivered by CcmC and transfers the heme to apo-cytochromes in a process facilitated by CcmF and CcmH. The polypeptide is Cytochrome c-type biogenesis protein CcmE (Sinorhizobium medicae (strain WSM419) (Ensifer medicae)).